A 506-amino-acid chain; its full sequence is Glycerol kinase (506 aa).

Thr-12 contributes to the ADP binding site. ATP is bound by residues Thr-12, Thr-13, and Ser-14. Residue Thr-12 participates in sn-glycerol 3-phosphate binding. An ADP-binding site is contributed by Arg-16. Sn-glycerol 3-phosphate is bound by residues Arg-82, Glu-83, Tyr-134, and Asp-246. The glycerol site is built by Arg-82, Glu-83, Tyr-134, Asp-246, and Gln-247. Residues Thr-268 and Gly-312 each coordinate ADP. Thr-268, Gly-312, Gln-316, and Gly-413 together coordinate ATP. Residues Gly-413 and Asn-417 each contribute to the ADP site.

This sequence belongs to the FGGY kinase family.

It catalyses the reaction glycerol + ATP = sn-glycerol 3-phosphate + ADP + H(+). It functions in the pathway polyol metabolism; glycerol degradation via glycerol kinase pathway; sn-glycerol 3-phosphate from glycerol: step 1/1. Inhibited by fructose 1,6-bisphosphate (FBP). Functionally, key enzyme in the regulation of glycerol uptake and metabolism. Catalyzes the phosphorylation of glycerol to yield sn-glycerol 3-phosphate. This is Glycerol kinase from Leifsonia xyli subsp. xyli (strain CTCB07).